We begin with the raw amino-acid sequence, 116 residues long: uncharacterized protein (116 aa).

Topologically, residues M1–Q46 are extracellular. N-linked (GlcNAc...) asparagine; by host glycans are attached at residues N4 and N12. The helical transmembrane segment at I47 to I67 threads the bilayer. Topologically, residues I68 to A116 are cytoplasmic.

It is found in the host membrane. This is an uncharacterized protein from Magallana gigas (Pacific oyster).